We begin with the raw amino-acid sequence, 954 residues long: Glycine dehydrogenase (decarboxylating) (954 aa).

K706 bears the N6-(pyridoxal phosphate)lysine mark.

Belongs to the GcvP family. In terms of assembly, the glycine cleavage system is composed of four proteins: P, T, L and H. Pyridoxal 5'-phosphate serves as cofactor.

The enzyme catalyses N(6)-[(R)-lipoyl]-L-lysyl-[glycine-cleavage complex H protein] + glycine + H(+) = N(6)-[(R)-S(8)-aminomethyldihydrolipoyl]-L-lysyl-[glycine-cleavage complex H protein] + CO2. Its function is as follows. The glycine cleavage system catalyzes the degradation of glycine. The P protein binds the alpha-amino group of glycine through its pyridoxal phosphate cofactor; CO(2) is released and the remaining methylamine moiety is then transferred to the lipoamide cofactor of the H protein. The protein is Glycine dehydrogenase (decarboxylating) of Pseudomonas syringae pv. tomato (strain ATCC BAA-871 / DC3000).